A 172-amino-acid chain; its full sequence is Large ribosomal subunit protein uL10 (172 aa).

The protein belongs to the universal ribosomal protein uL10 family. In terms of assembly, part of the ribosomal stalk of the 50S ribosomal subunit. The N-terminus interacts with L11 and the large rRNA to form the base of the stalk. The C-terminus forms an elongated spine to which L12 dimers bind in a sequential fashion forming a multimeric L10(L12)X complex.

In terms of biological role, forms part of the ribosomal stalk, playing a central role in the interaction of the ribosome with GTP-bound translation factors. The chain is Large ribosomal subunit protein uL10 from Methylorubrum extorquens (strain CM4 / NCIMB 13688) (Methylobacterium extorquens).